Consider the following 479-residue polypeptide: Anaerobic nitric oxide reductase flavorubredoxin (479 aa).

The zinc metallo-hydrolase stretch occupies residues 30–210 (LRGSSYNSYL…PFSRLVTPKI (181 aa)). Residues H79, E81, D83, H147, D166, and H227 each coordinate Fe cation. The region spanning 254-393 (ITIFYDTMSN…LCRQHGRDIA (140 aa)) is the Flavodoxin-like domain. FMN contacts are provided by residues 260–264 (TMSNN) and 342–369 (AFGS…EMSL). The 52-residue stretch at 423-474 (GPKMQCSVCQWIYDPALGEPLQDVAPGTPWSEVPDNFLCPECSLGKDVFDVL) folds into the Rubredoxin-like domain. Fe cation contacts are provided by C428, C431, C461, and C464.

The protein in the N-terminal section; belongs to the zinc metallo-hydrolase group 3 family. As to quaternary structure, homotetramer. It depends on Fe cation as a cofactor. FMN is required as a cofactor.

It is found in the cytoplasm. Its pathway is nitrogen metabolism; nitric oxide reduction. Functionally, anaerobic nitric oxide reductase; uses NADH to detoxify nitric oxide (NO), protecting several 4Fe-4S NO-sensitive enzymes. Has at least 2 reductase partners, only one of which (NorW, flavorubredoxin reductase) has been identified. NO probably binds to the di-iron center; electrons enter from the NorW at rubredoxin and are transferred sequentially to the FMN center and the di-iron center. Also able to function as an aerobic oxygen reductase. This chain is Anaerobic nitric oxide reductase flavorubredoxin, found in Salmonella paratyphi A (strain ATCC 9150 / SARB42).